The sequence spans 311 residues: Malate dehydrogenase (311 aa).

Residues 7-13 (GAAGGIG) and Asp-34 contribute to the NAD(+) site. Arg-81 and Arg-87 together coordinate substrate. Residues Asn-94 and 117–119 (ITN) each bind NAD(+). Substrate-binding residues include Asn-119 and Arg-153. Catalysis depends on His-177, which acts as the Proton acceptor. Met-227 serves as a coordination point for NAD(+).

This sequence belongs to the LDH/MDH superfamily. MDH type 1 family. As to quaternary structure, homodimer.

It catalyses the reaction (S)-malate + NAD(+) = oxaloacetate + NADH + H(+). Functionally, catalyzes the reversible oxidation of malate to oxaloacetate. The polypeptide is Malate dehydrogenase (mdh) (Vibrio cholerae serotype O1 (strain ATCC 39315 / El Tor Inaba N16961)).